The chain runs to 142 residues: Large ribosomal subunit protein uL13 (142 aa).

This sequence belongs to the universal ribosomal protein uL13 family. In terms of assembly, part of the 50S ribosomal subunit.

This protein is one of the early assembly proteins of the 50S ribosomal subunit, although it is not seen to bind rRNA by itself. It is important during the early stages of 50S assembly. This is Large ribosomal subunit protein uL13 from Maridesulfovibrio salexigens (strain ATCC 14822 / DSM 2638 / NCIMB 8403 / VKM B-1763) (Desulfovibrio salexigens).